A 329-amino-acid chain; its full sequence is MKVYYENDADLNLLKDKTVAIIGYGSQGHAHAQNLRDSGVKVVVGQRPGGANYELAKEHGFEPVSAAEAAAQADLIMILLPDQVQAEVYKNDIAPNLKSGDVLAFGHGFNIHFEQIAPPADVDVIMAAPKGPGHLVRRTYTEGGAVPAIIAVDQDASGKAFDIALAYAKGIGATRSGVLQTTFREETETDLFGEQAVLCGGLSELIKAGFETLVEAGYQPEIAYFECLHECKLIIDLIYEGGLAKMRDSISDTAEYGDLTRGPRVINDKSREEMKKILKEIQQGEFAREFIAENMTGKAHFSAMRRIGKEHQIEQVGGELRKMMSWLKK.

Positions 1–181 (MKVYYENDAD…GATRSGVLQT (181 aa)) constitute a KARI N-terminal Rossmann domain. NADP(+)-binding positions include 24–27 (YGSQ), R47, and 82–85 (DQVQ). Residue H107 is part of the active site. G133 lines the NADP(+) pocket. Residues 182–327 (TFREETETDL…GELRKMMSWL (146 aa)) form the KARI C-terminal knotted domain. Residues D190, E194, E226, and E230 each coordinate Mg(2+). Residue S251 coordinates substrate.

The protein belongs to the ketol-acid reductoisomerase family. Mg(2+) serves as cofactor.

It catalyses the reaction (2R)-2,3-dihydroxy-3-methylbutanoate + NADP(+) = (2S)-2-acetolactate + NADPH + H(+). The catalysed reaction is (2R,3R)-2,3-dihydroxy-3-methylpentanoate + NADP(+) = (S)-2-ethyl-2-hydroxy-3-oxobutanoate + NADPH + H(+). The protein operates within amino-acid biosynthesis; L-isoleucine biosynthesis; L-isoleucine from 2-oxobutanoate: step 2/4. Its pathway is amino-acid biosynthesis; L-valine biosynthesis; L-valine from pyruvate: step 2/4. Functionally, involved in the biosynthesis of branched-chain amino acids (BCAA). Catalyzes an alkyl-migration followed by a ketol-acid reduction of (S)-2-acetolactate (S2AL) to yield (R)-2,3-dihydroxy-isovalerate. In the isomerase reaction, S2AL is rearranged via a Mg-dependent methyl migration to produce 3-hydroxy-3-methyl-2-ketobutyrate (HMKB). In the reductase reaction, this 2-ketoacid undergoes a metal-dependent reduction by NADPH to yield (R)-2,3-dihydroxy-isovalerate. This is Ketol-acid reductoisomerase (NADP(+)) from Maridesulfovibrio salexigens (strain ATCC 14822 / DSM 2638 / NCIMB 8403 / VKM B-1763) (Desulfovibrio salexigens).